We begin with the raw amino-acid sequence, 467 residues long: Probable rhamnogalacturonase A (467 aa).

The signal sequence occupies residues 1 to 19 (MHSLSLISLALLSPLLVNA). A disulfide bond links Cys40 and Cys66. The active-site Proton donor is the Asp217. A disulfide bridge connects residues Cys219 and Cys236. Residues Asn237 and Asn252 are each glycosylated (N-linked (GlcNAc...) asparagine). His292 is an active-site residue. Asn319 is a glycosylation site (N-linked (GlcNAc...) asparagine). Disulfide bonds link Cys342–Cys348 and Cys370–Cys379.

The protein belongs to the glycosyl hydrolase 28 family.

It localises to the secreted. It carries out the reaction Endohydrolysis of alpha-D-GalA-(1-&gt;2)-alpha-L-Rha glycosidic bond in the rhamnogalacturonan I backbone with initial inversion of anomeric configuration releasing oligosaccharides with beta-D-GalA at the reducing end.. Pectinolytic enzymes consist of four classes of enzymes: pectine lyase, polygalacturonase, pectin methylesterase and rhamnogalacturonase. Hydrolyzes alpha-D-galacturonopyranosyl-(1,2)-alpha-L-rhamnopyranosyl linkages in the backbone of the hairy regions of pectins. The protein is Probable rhamnogalacturonase A (rhgA) of Aspergillus oryzae (strain ATCC 42149 / RIB 40) (Yellow koji mold).